Consider the following 384-residue polypeptide: Protein V (384 aa).

Disordered stretches follow at residues 1–23 and 38–317; these read MDQD…GGRE and SEPT…TKKG. A compositionally biased stretch (basic and acidic residues) spans 7 to 20; that stretch reads ILKEDSEVEREAPG. A compositionally biased stretch (polar residues) spans 50–59; the sequence is LHNTINTPQG. Phosphoserine; by host is present on Ser-68. A compositionally biased stretch (basic and acidic residues) spans 83-101; that stretch reads RSGEESRVSGRTSKPEAEA. Ser-125 carries the phosphoserine; by host modification. The segment covering 150 to 168 has biased composition (basic and acidic residues); it reads GIEDENREMAAHPDKRGED. The segment covering 191–206 has biased composition (polar residues); the sequence is ASNNGRSMEPGSSHSA. Phosphoserine; by host occurs at positions 192, 249, 257, and 260. The Zn(2+) site is built by His-318, Cys-337, Cys-341, Cys-353, Cys-355, Cys-358, Cys-362, and Cys-365.

It belongs to the paramyxoviruses V protein family. As to quaternary structure, interacts with host IFIH1/MDA5 and DHX58/LGP2. Interacts with host IRF3. Interacts with host RIGI regulatory protein (via CARDs domain) and host TRIM25 (via SPRY domain); these interactions prevent TRIM25-mediated ubiquitination of RIG-I and disrupts downstream RIG-I signaling.

It is found in the host cytoplasm. Functionally, plays an essential role in the inhibition of host immune response. Prevents the establishment of cellular antiviral state by blocking interferon-alpha/beta (IFN-alpha/beta) production and signaling pathway. Interacts with host IFIH1/MDA5 and DHX58/LGP2 to inhibit the transduction pathway involved in the activation of IFN-beta promoter, thus protecting the virus against cell antiviral state. Also interacts with and inhibits host IRF3. Blocks the type I interferon signaling pathway by disrupting the RIG-I signaling pathway. The sequence is that of Protein V (P/V/C) from Sendai virus (strain Fushimi) (SeV).